Consider the following 796-residue polypeptide: MASKTKASEALKVVARCRPLSRKEEAAGHEQILTMDVKLGQVTLRNPRAAPGELPKTFTFDAVYDASSKQADLYDETVRPLIDSVLQGFNGTVFAYGQTGTGKTYTMQGTWVEPELRGVIPNAFEHIFTHISRSQNQQYLVRASYLEIYQEEIRDLLSKEPGKRLELKENPETGVYIKDLSSFVTKNVKEIEHVMNLGNQARAVGSTHMNEVSSRSHAIFVITVECSERGSDGQDHIRVGKLNLVDLAGSERQNKAGPNAAGGPATQPTAGGGSGSGSASGSASSGERPKEASKINLSLSALGNVIAALAGNRSTHIPYRDSKLTRLLQDSLGGNAKTIMVATLGPASHSYDESLSTLRFANRAKNIKNKPRVNEDPKDTLLREFQEEIARLKAQLEKKGMLGKRPRRKSSRRKKAVSAPAGYPEGSVIEAWVAEEEDDNNNNHHPPQPILEAALEKNMENYLQDQKERLEEEKAAIQDDRSLVSEEKQKLLEEKEKMLEDLRREQQATELLAAKYKAMESKLLIGGRNIMDHTNEQQKMLELKRQEIAEQKRREREMQQEMLLRDEETMELRGTYSSLQQEVEVKTKKLKKLYAKLQAVKAEIQDQHEEYIRVRQDLEEAQNEQTRELKLKYLIIENFIPPEEKNKIMNRLFLDCEEEQWRFQPLVPAGVNNSQMKKRPTSAVGYKRPISQYARVAMAMGSHPRYRAENIMFLELDVSPPAIFEMEFSHDQEQDPRVLHMERLMRLDSFLERPSTTKVRKSRSWCQSPQRMPPPSTAHASMTSVPLHPATVVDHD.

The Kinesin motor domain occupies alanine 10–isoleucine 367. Glycine 97–threonine 104 is an ATP binding site. 3 disordered regions span residues arginine 252–alanine 292, glutamate 397–glycine 422, and lysine 758–aspartate 796. Over residues alanine 256 to threonine 269 the composition is skewed to low complexity. The stretch at lysine 378 to lysine 632 forms a coiled coil. The span at methionine 401–alanine 416 shows a compositional bias: basic residues. The tract at residues tyrosine 633–valine 793 is globular.

This sequence belongs to the TRAFAC class myosin-kinesin ATPase superfamily. Kinesin family. Kinesin II subfamily. In terms of assembly, heterodimer of KIF3A and KIF3C.

It is found in the cytoplasm. Its subcellular location is the cytoskeleton. In terms of biological role, microtubule-based anterograde translocator for membranous organelles. The polypeptide is Kinesin-like protein KIF3C (Kif3c) (Mus musculus (Mouse)).